A 93-amino-acid chain; its full sequence is Alpha-defensin 26 (93 aa).

A signal peptide spans 1-19 (MKTLVLLSALFLLAFQVQA). Residues 20 to 58 (DPIQNTDEETNTEVQPQEEDQAVSVSFGNPEGSDLQEES) constitute a propeptide that is removed on maturation. Residues 24–55 (NTDEETNTEVQPQEEDQAVSVSFGNPEGSDLQ) form a disordered region. A compositionally biased stretch (acidic residues) spans 25 to 40 (TDEETNTEVQPQEEDQ). Disulfide bonds link Cys-64–Cys-92, Cys-66–Cys-81, and Cys-71–Cys-91.

This sequence belongs to the alpha-defensin family.

It localises to the secreted. Its function is as follows. May have microbicidal activities. In Mus musculus (Mouse), this protein is Alpha-defensin 26 (Defa26).